We begin with the raw amino-acid sequence, 198 residues long: Ribonuclease HII (198 aa).

The region spanning 10–198 (QLVAGVDEVG…PVKRALGLAS (189 aa)) is the RNase H type-2 domain. Positions 16, 17, and 108 each coordinate a divalent metal cation.

It belongs to the RNase HII family. The cofactor is Mn(2+). Mg(2+) serves as cofactor.

The protein localises to the cytoplasm. It carries out the reaction Endonucleolytic cleavage to 5'-phosphomonoester.. Its function is as follows. Endonuclease that specifically degrades the RNA of RNA-DNA hybrids. This Escherichia coli O81 (strain ED1a) protein is Ribonuclease HII.